The following is a 1082-amino-acid chain: RE1-silencing transcription factor (1082 aa).

The segment at 32-117 (DLHELSKAEL…SLELSAVEPQ (86 aa)) is interaction with SIN3A. Residues 43–57 (APQLIMLANVALTGE) form an interaction with SIN3B region. Residues 140 to 413 (PVAEDKCRSS…KSKHPTCPSK (274 aa)) form an interaction with ZFP90 region. The C2H2-type 1 zinc finger occupies 154 to 176 (FRCKPCQYEAESEEQFVHHIRIH). The interval 196–207 (SGSSPAEEGEFS) is required for binding to the neuron-restrictive silencer element. 7 consecutive C2H2-type zinc fingers follow at residues 211-235 (IRCDRCGYNTNRYDHYMAHLKHHLR), 243-265 (YKCIICTYTTVSEYHWRKHLRNH), 271-293 (YTCSKCNYFSDRKNNYVQHVRTH), 299-321 (YKCELCPYSSSQKTHLTRHMRTH), 327-350 (FKCDQCNYVASNQHEVTRHARQVH), 356-378 (LNCPHCDYKTADRSNFKKHVELH), and 384-407 (FNCPVCDYAASKKCNLQYHFKSKH). 2 disordered regions span residues 408–809 (PTCP…ELSL) and 831–1027 (SKLL…KAGL). Basic and acidic residues predominate over residues 440–475 (EKMENEQTKTKGDVSGKKNEKPVKAVGKDASKEKKP). The segment covering 477–497 (SSVSVVQVTTRTRKSAVAAET) has biased composition (low complexity). Residues 581–597 (KGTKKTPPKTKTSKKGG) are compositionally biased toward basic residues. Positions 630-640 (VTGSGSSQTEL) are enriched in polar residues. Composition is skewed to pro residues over residues 684–713 (YPQPPQRGPAPPTGPAPPTGPAPPTEPAPP) and 729–751 (KEPPPSMEPPCPEELPQAEPPPM). Composition is skewed to basic and acidic residues over residues 798 to 807 (LRKDRAEKEL) and 854 to 864 (NSREETPKDQE). Polar residues predominate over residues 900-909 (RVSSSEQNSA). Ser-950 bears the Phosphoserine mark. Residues 985 to 1063 (EGIHSHDGSD…HLNRHLVNVY (79 aa)) are interaction with RCOR1. The segment at 1036 to 1058 (FVCIFCDRSFRKEKDYSKHLNRH) adopts a C2H2-type 9 zinc-finger fold.

In terms of assembly, isoform 1 and isoform 2 form heterodimers. Isoform 2: Forms homodimers and homooligomers; binds to the neuron-restrictive silencer element (NRSE) as monomer. Interacts with SIN3A, SIN3B and RCOR1. Interacts with CDYL. Interacts with EHMT1 and EHMT2 only in the presence of CDYL. Part of a complex containing at least CDYL, REST, WIZ, SETB1, EHMT1 and EHMT2. Interacts (via zinc-finger DNA-binding domain) with ZFP90 (via N- and C-termini); the interaction inhibits REST repressor activity. Interacts (via C2H2-type zinc finger 5) with PRICKLE1. Interacts with FBXW11 and BTRC. Interacts with USP7. In terms of processing, O-glycosylated. Post-translationally, phosphorylated; phosphorylation is required for ubiquitination. Ubiquitinated; ubiquitination is mediated by BTRC and leads to proteasomal degradation in G2 phase. Ubiquitination increases during neuronal differentiation. Deubiquitinated by USP7; leading to its stabilization and promoting the maintenance of neural progenitor cells. In terms of tissue distribution, expressed in the hippocampus, including quiescent neuronal progenitor (QNP) cells, transient-amplifying progenitor (TAP) cells, neuroblasts and mature neurons (at protein level). Expressed in embryonic stem cells (at protein level). Expressed in many non-neuronal tissues including the heart and liver. Abundantly expressed in osteoblastic lineage cells. Expressed in the spleen, kidney, blood cells, cortex, neocortex and in the utricle, saccule and organ of Corti of the inner ear. Isoform 2: Expressed in the cortex, neocortex and in the utricle, saccule and organ of Corti of the inner ear.

It localises to the nucleus. Its subcellular location is the cytoplasm. Transcriptional repressor which binds neuron-restrictive silencer element (NRSE) and represses neuronal gene transcription in non-neuronal cells. Restricts the expression of neuronal genes by associating with two distinct corepressors, SIN3A and RCOR1, which in turn recruit histone deacetylase to the promoters of REST-regulated genes. Mediates repression by recruiting the BHC complex at RE1/NRSE sites which acts by deacetylating and demethylating specific sites on histones, thereby acting as a chromatin modifier. Transcriptional repression by REST-CDYL via the recruitment of histone methyltransferase EHMT2 may be important in transformation suppression. Represses the expression of SRRM4 in non-neural cells to prevent the activation of neural-specific splicing events and to prevent production of REST isoform 2. Repressor activity may be inhibited by forming heterodimers with isoform 2, thereby preventing binding to NRSE or binding to corepressors and leading to derepression of target genes. Also maintains repression of neuronal genes in neural stem cells, and allows transcription and differentiation into neurons by dissociation from RE1/NRSE sites of target genes. Thereby is involved in maintaining the quiescent state of adult neural stem cells and preventing premature differentiation into mature neurons. Plays a role in the developmental switch in synaptic NMDA receptor composition during postnatal development, by repressing GRIN2B expression and thereby altering NMDA receptor properties from containing primarily GRIN2B to primarily GRIN2A subunits. Acts as a regulator of osteoblast differentiation. Key repressor of gene expression in hypoxia; represses genes in hypoxia by direct binding to an RE1/NRSE site on their promoter regions. May also function in stress resistance in the brain during aging; possibly by regulating expression of genes involved in cell death and in the stress response. Repressor of gene expression in the hippocampus after ischemia by directly binding to RE1/NRSE sites and recruiting SIN3A and RCOR1 to promoters of target genes, thereby promoting changes in chromatin modifications and ischemia-induced cell death. After ischemia, might play a role in repression of miR-132 expression in hippocampal neurons, thereby leading to neuronal cell death. Functionally, binds to the 3' region of the neuron-restrictive silencer element (NRSE), with lower affinity than isoform 1. Exhibits weaker repressor activity compared to isoform 1. May negatively regulate the repressor activity of isoform 1 by binding to isoform 1, thereby preventing its binding to NRSE and leading to derepression of target genes. However, in another study, does not appear to be implicated in repressor activity of a NRSE motif-containing reporter construct nor in inhibitory activity on the isoform 1 transcriptional repressor activity. Post-transcriptional inactivation of REST by SRRM4-dependent alternative splicing into isoform 2 is required in mechanosensory hair cells in the inner ear for derepression of neuronal genes, maintenance of hair cells and hearing. The chain is RE1-silencing transcription factor (Rest) from Mus musculus (Mouse).